The sequence spans 824 residues: Glycophorin-binding protein 130 (824 aa).

Positions arginine 84 to glutamate 88 match the PEXEL motif motif. 11 disordered regions span residues glutamate 97 to methionine 236, asparagine 258 to serine 291, aspartate 310 to glutamine 334, asparagine 358 to glutamine 384, asparagine 408 to glutamate 431, asparagine 457 to glycine 482, asparagine 507 to glycine 532, aspartate 559 to glycine 582, aspartate 659 to glutamine 683, asparagine 711 to glutamine 733, and aspartate 759 to glutamine 783. 2 stretches are compositionally biased toward basic and acidic residues: residues threonine 117–glutamine 140 and lysine 174–alanine 198. The span at lysine 200–serine 228 shows a compositional bias: polar residues. GBP repeat units lie at residues leucine 226–aspartate 275, leucine 276–aspartate 325, leucine 326–aspartate 375, leucine 376–glutamate 424, leucine 425–aspartate 474, leucine 475–aspartate 524, leucine 525–aspartate 574, leucine 575–glutamate 624, leucine 625–aspartate 674, leucine 675–aspartate 724, leucine 725–aspartate 774, and leucine 775–alanine 824. 10 stretches are compositionally biased toward basic and acidic residues: residues glutamate 264–leucine 276, aspartate 314–leucine 326, glutamate 364–leucine 376, glutamate 414–threonine 426, glutamate 463–leucine 475, glutamate 513–leucine 525, glutamate 563–leucine 575, glutamate 663–leucine 675, glutamate 713–leucine 725, and aspartate 763–leucine 775.

As to quaternary structure, interacts with host glycophorin.

Its subcellular location is the secreted. The protein resides in the cell surface. It localises to the host cytoplasm. In terms of biological role, involved in merozoite invasion of host erythrocytes. This is Glycophorin-binding protein 130 from Plasmodium falciparum (isolate 3D7).